A 438-amino-acid polypeptide reads, in one-letter code: MSTIVALATAPMNCAIHIIRVSGPKAFEIINKISTIKIKKETFKIWYTILKDDNQILDEVLINTFVAPKTFTGEDLVEINCHGGIVVANLIIKTLIKYGCQPAQRGEFSRRALLNKKMDLSKIEAINNLVNAKNELSVKGVIGALLGRVSQSIAEFRHELFMIIGQIEVNIDYPEYDDVEQVDAIILKQRLLSLDKKITKIIDQSKKFLPINKGIRVLIIGKPNVGKSTLLNALCNEQKAIVTDIPGTTRDVIESSINIDNITLNILDTAGIHLTNDFVENLGINKAKALIDKVDLILYLIPANEQQDLELYDLIKKQKHLLVYTKKDLVDQYDDKQIYINAKNNDIQSLIDEIKKLFYVQEFDNANIDVLQSQRQIGILENVHYLINNAILNLEKGDTLDLIVADLEFCNLRLNELLGISSEYDFLDDLFKNFCIGK.

Residues Arg20, Glu78, and Lys117 each coordinate (6S)-5-formyl-5,6,7,8-tetrahydrofolate. The TrmE-type G domain occupies 214-359; the sequence is GIRVLIIGKP…LIDEIKKLFY (146 aa). Position 224 (Asn224) interacts with K(+). GTP is bound by residues 224–229, 243–249, and 268–271; these read NVGKST, TDIPGTT, and DTAG. Residue Ser228 coordinates Mg(2+). K(+) contacts are provided by Thr243, Ile245, and Thr248. Thr249 lines the Mg(2+) pocket. Lys438 contacts (6S)-5-formyl-5,6,7,8-tetrahydrofolate.

Belongs to the TRAFAC class TrmE-Era-EngA-EngB-Septin-like GTPase superfamily. TrmE GTPase family. As to quaternary structure, homodimer. Heterotetramer of two MnmE and two MnmG subunits. K(+) serves as cofactor.

It is found in the cytoplasm. Its function is as follows. Exhibits a very high intrinsic GTPase hydrolysis rate. Involved in the addition of a carboxymethylaminomethyl (cmnm) group at the wobble position (U34) of certain tRNAs, forming tRNA-cmnm(5)s(2)U34. This chain is tRNA modification GTPase MnmE, found in Ureaplasma parvum serovar 3 (strain ATCC 27815 / 27 / NCTC 11736).